The sequence spans 212 residues: Large ribosomal subunit protein bL25 (212 aa).

The interval 183-212 (HDLPVASIHKPKGAKADDAEGEEGEEGGEE) is disordered. The span at 201–212 (AEGEEGEEGGEE) shows a compositional bias: acidic residues.

It belongs to the bacterial ribosomal protein bL25 family. CTC subfamily. In terms of assembly, part of the 50S ribosomal subunit; part of the 5S rRNA/L5/L18/L25 subcomplex. Contacts the 5S rRNA. Binds to the 5S rRNA independently of L5 and L18.

This is one of the proteins that binds to the 5S RNA in the ribosome where it forms part of the central protuberance. This chain is Large ribosomal subunit protein bL25, found in Marinobacter nauticus (strain ATCC 700491 / DSM 11845 / VT8) (Marinobacter aquaeolei).